The following is a 118-amino-acid chain: ATP synthase subunit gamma, chloroplastic (118 aa).

Residues cysteine 30 and cysteine 36 are joined by a disulfide bond.

It belongs to the ATPase gamma chain family. As to quaternary structure, F-type ATPases have 2 components, CF(1) - the catalytic core - and CF(0) - the membrane proton channel. CF(1) has five subunits: alpha(3), beta(3), gamma(1), delta(1), epsilon(1). CF(0) has four main subunits: a, b, b' and c.

The protein resides in the plastid. It is found in the chloroplast thylakoid membrane. Its function is as follows. Produces ATP from ADP in the presence of a proton gradient across the membrane. The gamma chain is believed to be important in regulating ATPase activity and the flow of protons through the CF(0) complex. In terms of biological role, inceptin is a proteolytic fragment produced by insect larvae that previously ingested the protein. This peptide mediate plant perception of herbivory through the induction of volatile, phenylpropanoid and protease inhibitor defenses such as ethylene, jasmonic acid and salicylic acid for example. This is ATP synthase subunit gamma, chloroplastic from Vigna unguiculata (Cowpea).